Here is a 130-residue protein sequence, read N- to C-terminus: Small ribosomal subunit protein uS9 (130 aa).

It belongs to the universal ribosomal protein uS9 family.

This is Small ribosomal subunit protein uS9 from Idiomarina loihiensis (strain ATCC BAA-735 / DSM 15497 / L2-TR).